The chain runs to 723 residues: tRNA (guanine(27)-N(2))-dimethyltransferase (723 aa).

Over residues 1–10 (MENMAEEELL) the composition is skewed to acidic residues. The interval 1 to 72 (MENMAEEELL…SLASVPEEAE (72 aa)) is disordered. At threonine 23 the chain carries Phosphothreonine. Positions 32 to 44 (PAADTALDSAPTP) are enriched in low complexity. Residues 45–59 (DSAPAPALAPAPAPA) are compositionally biased toward pro residues. Serine 61 bears the Phosphoserine mark. Positions 128 to 132 (HKLRR) match the Nucleolar localization signal motif. The C2H2-type zinc finger occupies 177–199 (YHCIICSATITRRTDMLGHVKRH). A Trm1 methyltransferase domain is found at 220–679 (EVLKETDTDI…ASLTQFKSIL (460 aa)). 4 residues coordinate S-adenosyl-L-methionine: arginine 253, aspartate 300, aspartate 348, and alanine 349. Positions 479, 482, 504, and 506 each coordinate Zn(2+). A Glycyl lysine isopeptide (Lys-Gly) (interchain with G-Cter in SUMO2) cross-link involves residue lysine 576. Serine 603 bears the Phosphoserine mark.

It belongs to the class I-like SAM-binding methyltransferase superfamily. Trm1 family.

The protein localises to the nucleus. Its subcellular location is the nucleolus. It catalyses the reaction guanosine(27) in tRNA(Tyr) + 2 S-adenosyl-L-methionine = N(2)-dimethylguanosine(27) in tRNA(Tyr) + 2 S-adenosyl-L-homocysteine + 2 H(+). Functionally, specifically dimethylates a single guanine residue at position 27 of tRNA(Tyr) using S-adenosyl-L-methionine as donor of the methyl groups. Dimethylation at position 27 of tRNA(Tyr) is required for efficient translation of tyrosine codons. Also required to maintain 3-(3-amino-3-carboxypropyl)uridine (acp3U) in the D-loop of several cytoplasmic tRNAs. The chain is tRNA (guanine(27)-N(2))-dimethyltransferase from Rattus norvegicus (Rat).